We begin with the raw amino-acid sequence, 407 residues long: Putative cell wall shaping protein YabE (407 aa).

Residues 1-31 form the signal peptide; sequence MKKLFSVKLSKSKVILVAACLLLAGSGTAYA. In terms of domain architecture, G5 spans 206–286; it reads ITRIEKVTDV…DKVIAVGTKQ (81 aa).

Functionally, suggested to be involved in cell wall modification. This Bacillus subtilis (strain 168) protein is Putative cell wall shaping protein YabE (yabE).